A 310-amino-acid polypeptide reads, in one-letter code: Putative S-adenosyl-L-methionine-dependent methyltransferase MAB_4587c (310 aa).

Residues Asp126 and 155-156 (DL) each bind S-adenosyl-L-methionine.

Belongs to the UPF0677 family.

In terms of biological role, exhibits S-adenosyl-L-methionine-dependent methyltransferase activity. This Mycobacteroides abscessus (strain ATCC 19977 / DSM 44196 / CCUG 20993 / CIP 104536 / JCM 13569 / NCTC 13031 / TMC 1543 / L948) (Mycobacterium abscessus) protein is Putative S-adenosyl-L-methionine-dependent methyltransferase MAB_4587c.